A 206-amino-acid polypeptide reads, in one-letter code: Uridine kinase (206 aa).

9 to 16 (GGSGSGKT) is an ATP binding site.

The protein belongs to the uridine kinase family.

The protein localises to the cytoplasm. The enzyme catalyses uridine + ATP = UMP + ADP + H(+). It carries out the reaction cytidine + ATP = CMP + ADP + H(+). The protein operates within pyrimidine metabolism; CTP biosynthesis via salvage pathway; CTP from cytidine: step 1/3. It participates in pyrimidine metabolism; UMP biosynthesis via salvage pathway; UMP from uridine: step 1/1. This is Uridine kinase from Borrelia turicatae (strain 91E135).